We begin with the raw amino-acid sequence, 1242 residues long: ATP-dependent helicase/nuclease subunit A (1242 aa).

Residues 13–486 (SQWTDDQWKA…IDLAKNFRSR (474 aa)) enclose the UvrD-like helicase ATP-binding domain. 34-41 (AAAGSGKT) serves as a coordination point for ATP. Positions 506–806 (GEIEYDADAE…RIMTIHKSKG (301 aa)) constitute a UvrD-like helicase C-terminal domain.

Belongs to the helicase family. AddA subfamily. As to quaternary structure, heterodimer of AddA and AddB/RexB. Mg(2+) is required as a cofactor.

It carries out the reaction Couples ATP hydrolysis with the unwinding of duplex DNA by translocating in the 3'-5' direction.. It catalyses the reaction ATP + H2O = ADP + phosphate + H(+). In terms of biological role, the heterodimer acts as both an ATP-dependent DNA helicase and an ATP-dependent, dual-direction single-stranded exonuclease. Recognizes the chi site generating a DNA molecule suitable for the initiation of homologous recombination. The AddA nuclease domain is required for chi fragment generation; this subunit has the helicase and 3' -&gt; 5' nuclease activities. This is ATP-dependent helicase/nuclease subunit A from Bacillus cytotoxicus (strain DSM 22905 / CIP 110041 / 391-98 / NVH 391-98).